We begin with the raw amino-acid sequence, 105 residues long: Small ribosomal subunit protein uS10 (105 aa).

The protein belongs to the universal ribosomal protein uS10 family. In terms of assembly, part of the 30S ribosomal subunit.

Functionally, involved in the binding of tRNA to the ribosomes. The polypeptide is Small ribosomal subunit protein uS10 (Legionella pneumophila (strain Paris)).